The following is a 370-amino-acid chain: Phosphoserine aminotransferase (370 aa).

Arginine 38 contributes to the L-glutamate binding site. Tryptophan 101, threonine 143, aspartate 166, and glutamine 189 together coordinate pyridoxal 5'-phosphate. N6-(pyridoxal phosphate)lysine is present on lysine 190. A pyridoxal 5'-phosphate-binding site is contributed by asparagine 243–threonine 244.

Belongs to the class-V pyridoxal-phosphate-dependent aminotransferase family. SerC subfamily. In terms of assembly, homodimer. Pyridoxal 5'-phosphate is required as a cofactor.

The protein localises to the cytoplasm. The enzyme catalyses O-phospho-L-serine + 2-oxoglutarate = 3-phosphooxypyruvate + L-glutamate. The catalysed reaction is 4-(phosphooxy)-L-threonine + 2-oxoglutarate = (R)-3-hydroxy-2-oxo-4-phosphooxybutanoate + L-glutamate. It functions in the pathway amino-acid biosynthesis; L-serine biosynthesis; L-serine from 3-phospho-D-glycerate: step 2/3. Its pathway is cofactor biosynthesis; pyridoxine 5'-phosphate biosynthesis; pyridoxine 5'-phosphate from D-erythrose 4-phosphate: step 3/5. Catalyzes the reversible conversion of 3-phosphohydroxypyruvate to phosphoserine and of 3-hydroxy-2-oxo-4-phosphonooxybutanoate to phosphohydroxythreonine. The chain is Phosphoserine aminotransferase (serC) from Methanosarcina barkeri (strain Fusaro / DSM 804).